A 543-amino-acid polypeptide reads, in one-letter code: MGTSLSPNDPWPLNPLSIQQTTLLLLLSVLATVHVGQRLLRQRRRQLRSAPPGPFAWPLIGNAAAVGQAAHLSFARLARRYGDVFQIRLGSCPIVVLNGERAIHQALVQQGSAFADRPAFASFRVVSGGRSMAFGHYSEHWKVQRRAAHSMMRNFFTRQPRSRQVLEGHVLSEARELVALLVRGSADGAFLDPRPLTVVAVANVMSAVCFGCRYSHDDPEFRELLSHNEEFGRTVGAGSLVDVMPWLQYFPNPVRTVFREFEQLNRNFSNFILDKFLRHCESLRPGAAPRDMMDAFILSAEKKAAGDSHGGGARLDLENVPATITDIFGASQDTLSTALQWLLLLFTRYPDVQTRVQAELDQVVGRDRLPCMGDQPNLPYVLAFLYEAMRFSSFVPVTIPHATTANTSVLGYHIPKDTVVFVNQWSVNHDPLKWPNPENFDPARFLDKDGLINKDLTSRVMIFSVGKRRCIGEELSKMQLFLFISILAHQCDFRANPNEPAKMNFSYGLTIKPKSFKVNVTLRESMELLDSAVQNLQAKETCQ.

C470 lines the heme pocket.

This sequence belongs to the cytochrome P450 family. It depends on heme as a cofactor. In terms of tissue distribution, expressed in heart, brain, lung, skeletal muscle, kidney, spleen, thymus, prostate, testis, ovary, small intestine, colon, and peripheral blood leukocytes. Expressed in retinal endothelial cells and umbilical vein endothelial cells (at protein level).

Its subcellular location is the endoplasmic reticulum membrane. It localises to the microsome membrane. The protein localises to the mitochondrion. It carries out the reaction an organic molecule + reduced [NADPH--hemoprotein reductase] + O2 = an alcohol + oxidized [NADPH--hemoprotein reductase] + H2O + H(+). It catalyses the reaction 17beta-estradiol + reduced [NADPH--hemoprotein reductase] + O2 = 2-hydroxy-17beta-estradiol + oxidized [NADPH--hemoprotein reductase] + H2O + H(+). The enzyme catalyses 17beta-estradiol + reduced [NADPH--hemoprotein reductase] + O2 = 4-hydroxy-17beta-estradiol + oxidized [NADPH--hemoprotein reductase] + H2O + H(+). The catalysed reaction is estrone + reduced [NADPH--hemoprotein reductase] + O2 = 2-hydroxyestrone + oxidized [NADPH--hemoprotein reductase] + H2O + H(+). It carries out the reaction estrone + reduced [NADPH--hemoprotein reductase] + O2 = 4-hydroxyestrone + oxidized [NADPH--hemoprotein reductase] + H2O + H(+). It catalyses the reaction testosterone + reduced [NADPH--hemoprotein reductase] + O2 = 6beta,17beta-dihydroxyandrost-4-en-3-one + oxidized [NADPH--hemoprotein reductase] + H2O + H(+). The enzyme catalyses progesterone + reduced [NADPH--hemoprotein reductase] + O2 = 6beta-hydroxyprogesterone + oxidized [NADPH--hemoprotein reductase] + H2O + H(+). The catalysed reaction is progesterone + reduced [NADPH--hemoprotein reductase] + O2 = 16alpha-hydroxyprogesterone + oxidized [NADPH--hemoprotein reductase] + H2O + H(+). It carries out the reaction all-trans-retinol + reduced [NADPH--hemoprotein reductase] + O2 = all-trans-retinal + oxidized [NADPH--hemoprotein reductase] + 2 H2O + H(+). It catalyses the reaction all-trans-retinal + reduced [NADPH--hemoprotein reductase] + O2 = all-trans-retinoate + oxidized [NADPH--hemoprotein reductase] + H2O + 2 H(+). The enzyme catalyses (5Z,8Z,11Z,14Z)-eicosatetraenoate + reduced [NADPH--hemoprotein reductase] + O2 = (8R,9S)-epoxy-(5Z,11Z,14Z)-eicosatrienoate + oxidized [NADPH--hemoprotein reductase] + H2O + H(+). The catalysed reaction is (5Z,8Z,11Z,14Z)-eicosatetraenoate + reduced [NADPH--hemoprotein reductase] + O2 = (11R,12S)-epoxy-(5Z,8Z,14Z)-eicosatrienoate + oxidized [NADPH--hemoprotein reductase] + H2O + H(+). It carries out the reaction (5Z,8Z,11Z,14Z)-eicosatetraenoate + reduced [NADPH--hemoprotein reductase] + O2 = (11S,12R)-epoxy-(5Z,8Z,14Z)-eicosatrienoate + oxidized [NADPH--hemoprotein reductase] + H2O + H(+). It catalyses the reaction (5Z,8Z,11Z,14Z)-eicosatetraenoate + reduced [NADPH--hemoprotein reductase] + O2 = (14R,15S)-epoxy-(5Z,8Z,11Z)-eicosatrienoate + oxidized [NADPH--hemoprotein reductase] + H2O + H(+). The enzyme catalyses (5S)-hydroperoxy-(6E,8Z,11Z,14Z)-eicosatetraenoate = 5-oxo-(6E,8Z,11Z,14Z)-eicosatetraenoate + H2O. The catalysed reaction is (12S)-hydroperoxy-(5Z,8Z,10E,14Z)-eicosatetraenoate = 12-oxo-(5Z,8Z,10E,14Z)-eicosatetraenoate + H2O. It carries out the reaction (13S)-hydroperoxy-(9Z,11E)-octadecadienoate = 13-oxo-(9Z,11E)-octadecadienoate + H2O. It catalyses the reaction (15S)-hydroperoxy-(5Z,8Z,11Z,13E)-eicosatetraenoate = 15-oxo-(5Z,8Z,11Z,13E)-eicosatetraenoate + H2O. The protein operates within steroid hormone biosynthesis. Its pathway is cofactor metabolism; retinol metabolism. It participates in lipid metabolism; arachidonate metabolism. With respect to regulation, enzyme activity is increased by liposomes containing anionic phospholipids, phosphatidic acid and cardiolipin. Inhibited by naringenin with an IC(50) of 5 uM. Enzyme activity is increased by cytochrome b5. Its function is as follows. A cytochrome P450 monooxygenase involved in the metabolism of various endogenous substrates, including fatty acids, steroid hormones and vitamins. Mechanistically, uses molecular oxygen inserting one oxygen atom into a substrate, and reducing the second into a water molecule, with two electrons provided by NADPH via cytochrome P450 reductase (NADPH--hemoprotein reductase). Exhibits catalytic activity for the formation of hydroxyestrogens from estrone (E1) and 17beta-estradiol (E2), namely 2- and 4-hydroxy E1 and E2. Displays a predominant hydroxylase activity toward E2 at the C-4 position. Metabolizes testosterone and progesterone to B or D ring hydroxylated metabolites. May act as a major enzyme for all-trans retinoic acid biosynthesis in extrahepatic tissues. Catalyzes two successive oxidative transformation of all-trans retinol to all-trans retinal and then to the active form all-trans retinoic acid. Catalyzes the epoxidation of double bonds of certain PUFA. Converts arachidonic acid toward epoxyeicosatrienoic acid (EpETrE) regioisomers, 8,9-, 11,12-, and 14,15- EpETrE, that function as lipid mediators in the vascular system. Additionally, displays dehydratase activity toward oxygenated eicosanoids hydroperoxyeicosatetraenoates (HpETEs). This activity is independent of cytochrome P450 reductase, NADPH, and O2. Also involved in the oxidative metabolism of xenobiotics, particularly converting polycyclic aromatic hydrocarbons and heterocyclic aryl amines procarcinogens to DNA-damaging products. Plays an important role in retinal vascular development. Under hyperoxic O2 conditions, promotes retinal angiogenesis and capillary morphogenesis, likely by metabolizing the oxygenated products generated during the oxidative stress. Also, contributes to oxidative homeostasis and ultrastructural organization and function of trabecular meshwork tissue through modulation of POSTN expression. The polypeptide is Cytochrome P450 1B1 (Homo sapiens (Human)).